The chain runs to 431 residues: Serine--tRNA ligase (431 aa).

Residues 41 to 66 (QSRTQELQAERNARSKSIGEAARRGE) form a disordered region. Position 240–242 (240–242 (TSE)) interacts with L-serine. Residue 271-273 (RSE) coordinates ATP. Position 294 (Glu294) interacts with L-serine. 358–361 (EISS) contacts ATP. Ser392 is a binding site for L-serine.

Belongs to the class-II aminoacyl-tRNA synthetase family. Type-1 seryl-tRNA synthetase subfamily. As to quaternary structure, homodimer. The tRNA molecule binds across the dimer.

The protein localises to the cytoplasm. The enzyme catalyses tRNA(Ser) + L-serine + ATP = L-seryl-tRNA(Ser) + AMP + diphosphate + H(+). It carries out the reaction tRNA(Sec) + L-serine + ATP = L-seryl-tRNA(Sec) + AMP + diphosphate + H(+). Its pathway is aminoacyl-tRNA biosynthesis; selenocysteinyl-tRNA(Sec) biosynthesis; L-seryl-tRNA(Sec) from L-serine and tRNA(Sec): step 1/1. Functionally, catalyzes the attachment of serine to tRNA(Ser). Is also able to aminoacylate tRNA(Sec) with serine, to form the misacylated tRNA L-seryl-tRNA(Sec), which will be further converted into selenocysteinyl-tRNA(Sec). This Aeromonas salmonicida (strain A449) protein is Serine--tRNA ligase.